The sequence spans 215 residues: Cytochrome b6 (215 aa).

A helical transmembrane segment spans residues Ile-32 to Phe-52. Cys-35 is a heme c binding site. Heme b-binding residues include His-86 and His-100. A run of 3 helical transmembrane segments spans residues Val-90–Phe-110, Leu-116–Tyr-136, and Leu-186–Ile-206. Residues His-187 and His-202 each coordinate heme b.

The protein belongs to the cytochrome b family. PetB subfamily. As to quaternary structure, the 4 large subunits of the cytochrome b6-f complex are cytochrome b6, subunit IV (17 kDa polypeptide, PetD), cytochrome f and the Rieske protein, while the 4 small subunits are PetG, PetL, PetM and PetN. The complex functions as a dimer. Heme b serves as cofactor. The cofactor is heme c.

It is found in the plastid. The protein localises to the chloroplast thylakoid membrane. Its function is as follows. Component of the cytochrome b6-f complex, which mediates electron transfer between photosystem II (PSII) and photosystem I (PSI), cyclic electron flow around PSI, and state transitions. The sequence is that of Cytochrome b6 from Pyropia yezoensis (Susabi-nori).